The primary structure comprises 344 residues: Chalcone synthase A (344 aa).

Residue cysteine 167 is part of the active site.

The protein belongs to the thiolase-like superfamily. Chalcone/stilbene synthases family.

It carries out the reaction (E)-4-coumaroyl-CoA + 3 malonyl-CoA + 3 H(+) = 2',4,4',6'-tetrahydroxychalcone + 3 CO2 + 4 CoA. The protein operates within secondary metabolite biosynthesis; flavonoid biosynthesis. The primary product of this enzyme is 4,2',4',6'-tetrahydroxychalcone (also termed naringenin-chalcone or chalcone) which can under specific conditions spontaneously isomerize into naringenin. In Ipomoea nil (Japanese morning glory), this protein is Chalcone synthase A (CHSA).